Reading from the N-terminus, the 391-residue chain is Arginine biosynthesis bifunctional protein ArgJ 2 (391 aa).

Residues Lys167 and Ser180 each coordinate substrate. Ser180 serves as the catalytic Nucleophile.

This sequence belongs to the ArgJ family. As to quaternary structure, heterotetramer of two alpha and two beta chains.

It localises to the cytoplasm. It catalyses the reaction N(2)-acetyl-L-ornithine + L-glutamate = N-acetyl-L-glutamate + L-ornithine. The catalysed reaction is L-glutamate + acetyl-CoA = N-acetyl-L-glutamate + CoA + H(+). It functions in the pathway amino-acid biosynthesis; L-arginine biosynthesis; L-ornithine and N-acetyl-L-glutamate from L-glutamate and N(2)-acetyl-L-ornithine (cyclic): step 1/1. The protein operates within amino-acid biosynthesis; L-arginine biosynthesis; N(2)-acetyl-L-ornithine from L-glutamate: step 1/4. In terms of biological role, catalyzes two activities which are involved in the cyclic version of arginine biosynthesis: the synthesis of N-acetylglutamate from glutamate and acetyl-CoA as the acetyl donor, and of ornithine by transacetylation between N(2)-acetylornithine and glutamate. This is Arginine biosynthesis bifunctional protein ArgJ 2 from Streptomyces clavuligerus.